We begin with the raw amino-acid sequence, 179 residues long: Putative endogenous retrovirus group FC1 Env polyprotein (179 aa).

The first 22 residues, 1–22 (MARPSPLCLLLLLTLLPPIVPS), serve as a signal peptide directing secretion. Residues 23–179 (NSLLTEPPFR…SKLRIFRTYV (157 aa)) form a truncated surface protein region. Asparagine 69 carries N-linked (GlcNAc...) asparagine glycosylation.

Belongs to the gamma type-C retroviral envelope protein family. HERV class-I F(c)1 env subfamily.

It is found in the virion. Its function is as follows. Retroviral envelope proteins mediate receptor recognition and membrane fusion during early infection. Endogenous envelope proteins may have kept, lost or modified their original function during evolution. The sequence is that of Putative endogenous retrovirus group FC1 Env polyprotein (ERVFC1) from Gorilla gorilla gorilla (Western lowland gorilla).